The sequence spans 156 residues: Arginine repressor (156 aa).

The protein belongs to the ArgR family.

It is found in the cytoplasm. It functions in the pathway amino-acid biosynthesis; L-arginine biosynthesis [regulation]. Functionally, regulates arginine biosynthesis genes. The polypeptide is Arginine repressor (Aliivibrio fischeri (strain ATCC 700601 / ES114) (Vibrio fischeri)).